A 157-amino-acid polypeptide reads, in one-letter code: Endoribonuclease YbeY (157 aa).

Residues H114, H118, and H124 each coordinate Zn(2+).

It belongs to the endoribonuclease YbeY family. Zn(2+) is required as a cofactor.

It localises to the cytoplasm. Functionally, single strand-specific metallo-endoribonuclease involved in late-stage 70S ribosome quality control and in maturation of the 3' terminus of the 16S rRNA. The polypeptide is Endoribonuclease YbeY (Caulobacter vibrioides (strain ATCC 19089 / CIP 103742 / CB 15) (Caulobacter crescentus)).